Consider the following 270-residue polypeptide: Gene 1 protein (270 aa).

The segment at 225–249 (WAEEDPPVAAVPLEPEDATAPGKEP) is disordered.

The chain is Gene 1 protein (1) from Mycobacterium (Mycobacteriophage D29).